A 240-amino-acid chain; its full sequence is 2,3,4,5-tetrahydropyridine-2,6-dicarboxylate N-acetyltransferase (240 aa).

It belongs to the transferase hexapeptide repeat family. DapH subfamily.

The enzyme catalyses (S)-2,3,4,5-tetrahydrodipicolinate + acetyl-CoA + H2O = L-2-acetamido-6-oxoheptanedioate + CoA. It participates in amino-acid biosynthesis; L-lysine biosynthesis via DAP pathway; LL-2,6-diaminopimelate from (S)-tetrahydrodipicolinate (acetylase route): step 1/3. Functionally, catalyzes the transfer of an acetyl group from acetyl-CoA to tetrahydrodipicolinate. The sequence is that of 2,3,4,5-tetrahydropyridine-2,6-dicarboxylate N-acetyltransferase from Bacillus mycoides (strain KBAB4) (Bacillus weihenstephanensis).